We begin with the raw amino-acid sequence, 460 residues long: ATP synthase subunit beta (460 aa).

Residue 150 to 157 coordinates ATP; sequence GGAGVGKT.

The protein belongs to the ATPase alpha/beta chains family. As to quaternary structure, F-type ATPases have 2 components, CF(1) - the catalytic core - and CF(0) - the membrane proton channel. CF(1) has five subunits: alpha(3), beta(3), gamma(1), delta(1), epsilon(1). CF(0) has three main subunits: a(1), b(2) and c(9-12). The alpha and beta chains form an alternating ring which encloses part of the gamma chain. CF(1) is attached to CF(0) by a central stalk formed by the gamma and epsilon chains, while a peripheral stalk is formed by the delta and b chains.

The protein resides in the cell inner membrane. The enzyme catalyses ATP + H2O + 4 H(+)(in) = ADP + phosphate + 5 H(+)(out). Functionally, produces ATP from ADP in the presence of a proton gradient across the membrane. The catalytic sites are hosted primarily by the beta subunits. The chain is ATP synthase subunit beta from Photorhabdus laumondii subsp. laumondii (strain DSM 15139 / CIP 105565 / TT01) (Photorhabdus luminescens subsp. laumondii).